The primary structure comprises 271 residues: tRNA pseudouridine synthase A (271 aa).

Catalysis depends on aspartate 51, which acts as the Nucleophile. A substrate-binding site is contributed by tyrosine 109.

Belongs to the tRNA pseudouridine synthase TruA family. Homodimer.

It carries out the reaction uridine(38/39/40) in tRNA = pseudouridine(38/39/40) in tRNA. Its function is as follows. Formation of pseudouridine at positions 38, 39 and 40 in the anticodon stem and loop of transfer RNAs. The protein is tRNA pseudouridine synthase A of Methylococcus capsulatus (strain ATCC 33009 / NCIMB 11132 / Bath).